We begin with the raw amino-acid sequence, 1201 residues long: Period circadian protein homolog 3 (1201 aa).

The segment at 1–50 (MPRGEAPGPGRRGAKDEALGEESGERWSPEFHLQRKLADSSHSEQQDRNR) is disordered. Residues 13-50 (GAKDEALGEESGERWSPEFHLQRKLADSSHSEQQDRNR) show a composition bias toward basic and acidic residues. The Nuclear export signal 1 signature appears at 55-64 (LIMVVQEMKK). 2 PAS domains span residues 121–188 (IASE…RAQL) and 262–328 (YEAP…KVLK). The 44-residue stretch at 337–380 (HSPIRFCTQNGDYIILDSSWSSFVNPWSRKISFIIGRHKVRTSP) folds into the PAC domain. Positions 403-412 (LQEQIYKLLL) match the Nuclear export signal 3 motif. Residues 555–760 (LKRKCISCTN…SSSNTGSGPR (206 aa)) are CSNK1E binding domain. Disordered regions lie at residues 717-788 (YSYF…FPPA) and 881-923 (PSMS…RSSS). The span at 721–731 (QGDSTSKQTRS) shows a compositional bias: polar residues. Positions 729–745 (TRSAGCRKGKHKRKKLP) match the Nuclear localization signal motif. The segment covering 733–743 (GCRKGKHKRKK) has biased composition (basic residues). Low complexity-rich tracts occupy residues 767-783 (AQPC…TSSP) and 881-890 (PSMSSAMSPT). The segment covering 900 to 911 (QRREEEKWEAQS) has biased composition (basic and acidic residues). A Phosphoserine modification is found at serine 919. Positions 925-932 (LQLNLLQE) match the Nuclear export signal 2 motif. The interval 952–1067 (TEYCVTGNNG…GSAASGSSDS (116 aa)) is disordered. Composition is skewed to polar residues over residues 957-976 (TGNN…STGS), 983-994 (SHPTASALSTGS), 1001-1012 (SHPTASALSTGS), and 1035-1050 (TPSH…GSPP). A run of 5 repeats spans residues 965 to 982 (SPAT…RENP), 983 to 1000 (SHPT…MKNP), 1001 to 1018 (SHPT…MKNP), 1019 to 1036 (SHPT…SRTP), and 1037 to 1054 (SHPT…SESP). Residues 965-1054 (SPATTGALST…STGSPPSESP (90 aa)) form a 5 X 18 AA tandem repeats of S-[HP]-[AP]-T-[AT]-[GST]-[ATV]-L-S-[MT]-G-[LS]-P-P-[MRS]-[EKR]-[NST]-P region. A Phosphoserine modification is found at serine 994. A Phosphoserine modification is found at serine 1053. Positions 1053 to 1067 (SPSRTGSAASGSSDS) are enriched in low complexity. Positions 1123–1201 (ERVKEVVLKE…CGQVLVEDSC (79 aa)) are CRY binding domain.

Homodimer. Component of the circadian core oscillator, which includes the CRY proteins, CLOCK or NPAS2, BMAL1 or BMAL2, CSNK1D and/or CSNK1E, TIMELESS and the PER proteins. Interacts directly with PER1, PER2, CRY1, CRY2, and TIMELESS; interaction with CRY1 and CRY2 is weak and not rhythmic. Interacts with FBXW11 and BTRC. In terms of processing, phosphorylation by CSNK1E is weak and appears to require association with PER1 and translocation to the nucleus. Post-translationally, ubiquitinated.

The protein resides in the cytoplasm. Its subcellular location is the nucleus. Its function is as follows. Originally described as a core component of the circadian clock. The circadian clock, an internal time-keeping system, regulates various physiological processes through the generation of approximately 24 hour circadian rhythms in gene expression, which are translated into rhythms in metabolism and behavior. It is derived from the Latin roots 'circa' (about) and 'diem' (day) and acts as an important regulator of a wide array of physiological functions including metabolism, sleep, body temperature, blood pressure, endocrine, immune, cardiovascular, and renal function. Consists of two major components: the central clock, residing in the suprachiasmatic nucleus (SCN) of the brain, and the peripheral clocks that are present in nearly every tissue and organ system. Both the central and peripheral clocks can be reset by environmental cues, also known as Zeitgebers (German for 'timegivers'). The predominant Zeitgeber for the central clock is light, which is sensed by retina and signals directly to the SCN. The central clock entrains the peripheral clocks through neuronal and hormonal signals, body temperature and feeding-related cues, aligning all clocks with the external light/dark cycle. Circadian rhythms allow an organism to achieve temporal homeostasis with its environment at the molecular level by regulating gene expression to create a peak of protein expression once every 24 hours to control when a particular physiological process is most active with respect to the solar day. Transcription and translation of core clock components (CLOCK, NPAS2, BMAL1, BMAL2, PER1, PER2, PER3, CRY1 and CRY2) plays a critical role in rhythm generation, whereas delays imposed by post-translational modifications (PTMs) are important for determining the period (tau) of the rhythms (tau refers to the period of a rhythm and is the length, in time, of one complete cycle). A diurnal rhythm is synchronized with the day/night cycle, while the ultradian and infradian rhythms have a period shorter and longer than 24 hours, respectively. Disruptions in the circadian rhythms contribute to the pathology of cardiovascular diseases, cancer, metabolic syndromes and aging. A transcription/translation feedback loop (TTFL) forms the core of the molecular circadian clock mechanism. Transcription factors, CLOCK or NPAS2 and BMAL1 or BMAL2, form the positive limb of the feedback loop, act in the form of a heterodimer and activate the transcription of core clock genes and clock-controlled genes (involved in key metabolic processes), harboring E-box elements (5'-CACGTG-3') within their promoters. The core clock genes: PER1/2/3 and CRY1/2 which are transcriptional repressors form the negative limb of the feedback loop and interact with the CLOCK|NPAS2-BMAL1|BMAL2 heterodimer inhibiting its activity and thereby negatively regulating their own expression. This heterodimer also activates nuclear receptors NR1D1, NR1D2, RORA, RORB and RORG, which form a second feedback loop and which activate and repress BMAL1 transcription, respectively. Has a redundant role with the other PER proteins PER1 and PER2 and is not essential for the circadian rhythms maintenance. In contrast, plays an important role in sleep-wake timing and sleep homeostasis probably through the transcriptional regulation of sleep homeostasis-related genes, without influencing circadian parameters. Can bind heme. This Homo sapiens (Human) protein is Period circadian protein homolog 3 (PER3).